A 542-amino-acid chain; its full sequence is Probable myosin-binding protein 6 (542 aa).

A signal peptide spans 1-21; that stretch reads MYIQLLCFFLFLFLLLQATMS. Residues 39 to 59 traverse the membrane as a helical segment; sequence FLIYTVLEWSLIVFLFIDGVI. The interval 219-239 is disordered; it reads SFLAPAPSPRVSHNKLSENES. Positions 300–398 constitute a GTD-binding domain; the sequence is SILNQLKKEV…ELEAEFEVYR (99 aa). The disordered stretch occupies residues 419–480; it reads GNASAYDDCQ…DEEKGSESKE (62 aa). A compositionally biased stretch (polar residues) spans 437-456; the sequence is AVSSSNQQENGENIDQNGQS. Over residues 471–480 the composition is skewed to basic and acidic residues; the sequence is DEEKGSESKE.

It is found in the membrane. Probable membrane-anchored myosin receptors. This chain is Probable myosin-binding protein 6, found in Arabidopsis thaliana (Mouse-ear cress).